A 459-amino-acid polypeptide reads, in one-letter code: Tryptophan synthase beta chain (459 aa).

K121 is subject to N6-(pyridoxal phosphate)lysine.

This sequence belongs to the TrpB family. As to quaternary structure, tetramer of two alpha and two beta chains. It depends on pyridoxal 5'-phosphate as a cofactor.

It carries out the reaction (1S,2R)-1-C-(indol-3-yl)glycerol 3-phosphate + L-serine = D-glyceraldehyde 3-phosphate + L-tryptophan + H2O. It functions in the pathway amino-acid biosynthesis; L-tryptophan biosynthesis; L-tryptophan from chorismate: step 5/5. In terms of biological role, the beta subunit is responsible for the synthesis of L-tryptophan from indole and L-serine. This is Tryptophan synthase beta chain (trpB) from Pyrococcus horikoshii (strain ATCC 700860 / DSM 12428 / JCM 9974 / NBRC 100139 / OT-3).